A 610-amino-acid polypeptide reads, in one-letter code: Glutamine--fructose-6-phosphate aminotransferase [isomerizing] (610 aa).

Cysteine 2 serves as the catalytic Nucleophile; for GATase activity. One can recognise a Glutamine amidotransferase type-2 domain in the interval 2 to 218 (CGIVGAVAQR…EGDVAEITRR (217 aa)). 2 consecutive SIS domains span residues 286–426 (AAEI…QQGR) and 459–600 (LATD…VDQP). Lysine 605 functions as the For Fru-6P isomerization activity in the catalytic mechanism.

As to quaternary structure, homodimer.

The protein resides in the cytoplasm. It carries out the reaction D-fructose 6-phosphate + L-glutamine = D-glucosamine 6-phosphate + L-glutamate. Functionally, catalyzes the first step in hexosamine metabolism, converting fructose-6P into glucosamine-6P using glutamine as a nitrogen source. This is Glutamine--fructose-6-phosphate aminotransferase [isomerizing] from Vibrio vulnificus (strain CMCP6).